The primary structure comprises 381 residues: Protein YkfC (381 aa).

Positions 72-337 constitute a Reverse transcriptase domain; it reads LRDELLSGHY…DGFIFLGHRL (266 aa). Aspartate 166, aspartate 284, and aspartate 285 together coordinate Mg(2+).

It belongs to the bacterial reverse transcriptase family.

The sequence is that of Protein YkfC (ykfC) from Escherichia coli (strain K12).